Here is a 652-residue protein sequence, read N- to C-terminus: Acetyl-coenzyme A synthetase (652 aa).

CoA contacts are provided by residues 191-194 (RAGR), T311, and N335. ATP-binding positions include 387-389 (GEP), 411-416 (DTWWQT), D500, and R515. S523 is a binding site for CoA. Residue R526 participates in ATP binding. Mg(2+) contacts are provided by V537, H539, and I542. R584 serves as a coordination point for CoA. N6-acetyllysine is present on K609.

This sequence belongs to the ATP-dependent AMP-binding enzyme family. The cofactor is Mg(2+). Post-translationally, acetylated. Deacetylation by the SIR2-homolog deacetylase activates the enzyme.

It catalyses the reaction acetate + ATP + CoA = acetyl-CoA + AMP + diphosphate. In terms of biological role, catalyzes the conversion of acetate into acetyl-CoA (AcCoA), an essential intermediate at the junction of anabolic and catabolic pathways. Acs undergoes a two-step reaction. In the first half reaction, Acs combines acetate with ATP to form acetyl-adenylate (AcAMP) intermediate. In the second half reaction, it can then transfer the acetyl group from AcAMP to the sulfhydryl group of CoA, forming the product AcCoA. Functionally, enables the cell to use acetate during aerobic growth to generate energy via the TCA cycle, and biosynthetic compounds via the glyoxylate shunt. Acetylates CheY, the response regulator involved in flagellar movement and chemotaxis. The chain is Acetyl-coenzyme A synthetase from Escherichia coli O157:H7.